Consider the following 1222-residue polypeptide: ATP-dependent helicase/nuclease subunit A (1222 aa).

The UvrD-like helicase ATP-binding domain maps to 39-495 (QKRTAQQIEA…ILLKENFRSQ (457 aa)). Residue 60-67 (ASAGSGKT) coordinates ATP. One can recognise a UvrD-like helicase C-terminal domain in the interval 524-810 (QLIAGSHAQT…NLMTIHKSKG (287 aa)).

Belongs to the helicase family. AddA subfamily. As to quaternary structure, heterodimer of AddA and AddB/RexB. It depends on Mg(2+) as a cofactor.

The catalysed reaction is Couples ATP hydrolysis with the unwinding of duplex DNA by translocating in the 3'-5' direction.. It carries out the reaction ATP + H2O = ADP + phosphate + H(+). The heterodimer acts as both an ATP-dependent DNA helicase and an ATP-dependent, dual-direction single-stranded exonuclease. Recognizes the chi site generating a DNA molecule suitable for the initiation of homologous recombination. The AddA nuclease domain is required for chi fragment generation; this subunit has the helicase and 3' -&gt; 5' nuclease activities. This Streptococcus pyogenes serotype M12 (strain MGAS9429) protein is ATP-dependent helicase/nuclease subunit A.